Consider the following 135-residue polypeptide: Protein PsiE homolog (135 aa).

The next 4 membrane-spanning stretches (helical) occupy residues 13–33 (VLQW…VIFL), 54–74 (YMLV…ALIV), 82–102 (HFPL…LIIV), and 107–127 (PNDT…LYLA).

It belongs to the PsiE family.

It localises to the cell inner membrane. In Edwardsiella ictaluri (strain 93-146), this protein is Protein PsiE homolog.